We begin with the raw amino-acid sequence, 306 residues long: tRNA pseudouridine synthase B (306 aa).

Asp-48 serves as the catalytic Nucleophile.

It belongs to the pseudouridine synthase TruB family. Type 1 subfamily.

The catalysed reaction is uridine(55) in tRNA = pseudouridine(55) in tRNA. Functionally, responsible for synthesis of pseudouridine from uracil-55 in the psi GC loop of transfer RNAs. In Haemophilus influenzae (strain 86-028NP), this protein is tRNA pseudouridine synthase B.